A 184-amino-acid polypeptide reads, in one-letter code: ATP synthase subunit b, chloroplastic (184 aa).

The helical transmembrane segment at 27-49 (LATNPINLSVVLGVLIFFGKGVL) threads the bilayer.

This sequence belongs to the ATPase B chain family. In terms of assembly, F-type ATPases have 2 components, F(1) - the catalytic core - and F(0) - the membrane proton channel. F(1) has five subunits: alpha(3), beta(3), gamma(1), delta(1), epsilon(1). F(0) has four main subunits: a(1), b(1), b'(1) and c(10-14). The alpha and beta chains form an alternating ring which encloses part of the gamma chain. F(1) is attached to F(0) by a central stalk formed by the gamma and epsilon chains, while a peripheral stalk is formed by the delta, b and b' chains.

It localises to the plastid. The protein resides in the chloroplast thylakoid membrane. In terms of biological role, f(1)F(0) ATP synthase produces ATP from ADP in the presence of a proton or sodium gradient. F-type ATPases consist of two structural domains, F(1) containing the extramembraneous catalytic core and F(0) containing the membrane proton channel, linked together by a central stalk and a peripheral stalk. During catalysis, ATP synthesis in the catalytic domain of F(1) is coupled via a rotary mechanism of the central stalk subunits to proton translocation. Component of the F(0) channel, it forms part of the peripheral stalk, linking F(1) to F(0). In Morus indica (Mulberry), this protein is ATP synthase subunit b, chloroplastic.